A 257-amino-acid chain; its full sequence is Golgi SNAP receptor complex member 1-2 (257 aa).

Residues 1–235 (MTESSLDLQE…GSIKRKRSRD (235 aa)) lie on the Cytoplasmic side of the membrane. Position 51 is a phosphoserine (Asn-51). A coiled-coil region spans residues 113 to 147 (TQKLARHRDILHEYTQEFRRIKGNINSLREHAELL). The chain crosses the membrane as a helical; Anchor for type IV membrane protein span at residues 236–256 (TLILSAVIAACTLFLIIYWLS). A topological domain (vesicular) is located at residue Lys-257.

It belongs to the GOSR1 family. As to quaternary structure, component of several multiprotein Golgi SNARE complexes.

Its subcellular location is the golgi apparatus membrane. The protein localises to the endoplasmic reticulum membrane. Functionally, involved in transport from the ER to the Golgi apparatus as well as in intra-Golgi transport. It belongs to a super-family of proteins called t-SNAREs or soluble NSF (N-ethylmaleimide-sensitive factor) attachment protein receptor. This is Golgi SNAP receptor complex member 1-2 (GOS12) from Arabidopsis thaliana (Mouse-ear cress).